A 168-amino-acid polypeptide reads, in one-letter code: MAQNEELTTEAVEAEENPTSYTSESSAAEAAPKKERPALTVAGAAVGRRKEAVARVRVVPGSGKWTINGRALDNYFPNKLHQQDVNEPFKILDLEGAYDVIARIHGGGISGQAGALRLGIARSLNEIDVENNRATLKKAGYLSRDARVIERKKAGLKKARKAQQYSKR.

A compositionally biased stretch (low complexity) spans 1 to 11 (MAQNEELTTEA). The disordered stretch occupies residues 1-36 (MAQNEELTTEAVEAEENPTSYTSESSAAEAAPKKER).

It belongs to the universal ribosomal protein uS9 family.

The protein is Small ribosomal subunit protein uS9 of Pseudarthrobacter chlorophenolicus (strain ATCC 700700 / DSM 12829 / CIP 107037 / JCM 12360 / KCTC 9906 / NCIMB 13794 / A6) (Arthrobacter chlorophenolicus).